The primary structure comprises 241 residues: Terpene cyclase terB (241 aa).

5 helical membrane-spanning segments follow: residues 19-39 (LADT…GAMI), 48-68 (YCMG…YTLV), 75-95 (VELA…FAAT), 114-134 (LIFL…AAEI), and 137-157 (ALAY…GGVC). An N-linked (GlcNAc...) asparagine glycan is attached at Asn163. The next 2 helical transmembrane spans lie at 169 to 189 (SVTL…FAFL) and 198 to 218 (FAWL…LADI).

This sequence belongs to the paxB family.

The protein localises to the membrane. Its pathway is secondary metabolite biosynthesis. Terpene cyclase; part of the gene cluster that mediates the biosynthesis of terpendoles, indole-diterpene (IDT) mycotoxins including terpendole I, terpendole K, terpendole C, as well as the kinesin Eg5 inhibitor terpendole E. Terpendoles biosynthesis begins with the synthesis of geranylgeranyl diphosphate (GGPP) by a yet unidentified GGPP synthase. Condensation of indole-3-glycerol phosphate with GGPP by the prenyltransferase terC then forms 3-geranylgeranylindole (3-GGI), followed by epoxidation and cyclization of this intermediate (by the FAD-dependent monooxygeanse terM and the terpene cyclase terB) to form paspaline. The cytochrome monooxygenase terQ then hydroxylates paspalline at C-11 to yield terpendole E. The cytochrome monooxygenase terP converts terpendole E to 13-desoxyterpendole I, and terQ converts 13-desoxyterpendole I into terpendole I. TerF and terK are required for conversion of terpendole I to terpendole C which is further converted to terpendole K. The chain is Terpene cyclase terB from Tolypocladium album (Soil fungus).